Here is a 201-residue protein sequence, read N- to C-terminus: Superoxide dismutase [Mn] (201 aa).

Residues His27, His81, Asp163, and His167 each coordinate Mn(2+).

Belongs to the iron/manganese superoxide dismutase family. In terms of assembly, homodimer. The cofactor is Mn(2+).

The protein resides in the secreted. It carries out the reaction 2 superoxide + 2 H(+) = H2O2 + O2. In terms of biological role, destroys superoxide anion radicals which are normally produced within the cells and which are toxic to biological systems. The chain is Superoxide dismutase [Mn] (sodA) from Streptococcus pyogenes serotype M6 (strain ATCC BAA-946 / MGAS10394).